The sequence spans 92 residues: Alpha-conotoxin FrXXA (92 aa).

A signal peptide spans 1 to 24 (MPKLEMMLLVLLILPLSYFDSAGG). Residues 25 to 45 (QAVKVDGHGDGMDRYLQRDDR) constitute a propeptide that is removed on maturation. Cystine bridges form between Cys63-Cys72, Cys68-Cys80, Cys73-Cys90, and Cys78-Cys92.

This sequence belongs to the conotoxin D superfamily. Homodimer; disulfide-linked. Post-translationally, the homodimer contains 10 disulfide bonds. As to expression, expressed by the venom duct.

The protein localises to the secreted. In terms of biological role, alpha-conotoxins act on postsynaptic membranes, they bind to the nicotinic acetylcholine receptors (nAChR) and thus inhibit them. Through its two C-terminal domains, this homodimeric protein would bind to two nAChR allosteric sites, located outside the nAChR C-loop of the principal binding face and at the adjacent binding interface in a clockwise direction. This toxin blocks both neuronal and muscular subtypes: human alpha-7/CHRNA7, human alpha-3-beta-2 (CHRNA3-CHRNB2), human alpha-4-beta-2 (CHRNA4-CHRNB2), mouse adult muscular subtype alpha-1-beta-1-delta-epsilon (CHRNA1-CHRNB1-CHRND-CHRNE), and mouse fetal muscular subtype alpha-1-beta-1-gamma-delta (CHRNA1-CHRNB1-CHRNG-CHRND). Shows different dissociation rates towards the different subtypes, with a very slow rate towards alpha-7 subtype (almost irreversible), followed by the adult muscular subtype, the fetal muscular subtype, alpha-3-beta-2 and alpha-4-beta-2 (almost entirely reversible within a few minutes of washing). The protein is Alpha-conotoxin FrXXA of Conus fergusoni (Ferguson's cone).